Reading from the N-terminus, the 555-residue chain is CTP synthase (555 aa).

The amidoligase domain stretch occupies residues 1-271 (MVKRGKKTKY…DDKLAELFNI (271 aa)). S19 contacts CTP. UTP is bound at residue S19. Residues 20–25 (SLGKGL) and D77 contribute to the ATP site. D77 and E145 together coordinate Mg(2+). CTP contacts are provided by residues 152-154 (DIE), 192-197 (KTKPTQ), and K228. UTP-binding positions include 192 to 197 (KTKPTQ) and K228. A Glutamine amidotransferase type-1 domain is found at 297-537 (RIGIVGKYVE…VKAALEHRDA (241 aa)). Residue G358 coordinates L-glutamine. Catalysis depends on C385, which acts as the Nucleophile; for glutamine hydrolysis. Residues 386–389 (LGLQ), E409, and R466 each bind L-glutamine. Active-site residues include H510 and E512. The tract at residues 535-555 (RDAQQRQPPAEVKKLAVGKNG) is disordered.

The protein belongs to the CTP synthase family. As to quaternary structure, homotetramer.

It catalyses the reaction UTP + L-glutamine + ATP + H2O = CTP + L-glutamate + ADP + phosphate + 2 H(+). It carries out the reaction L-glutamine + H2O = L-glutamate + NH4(+). The catalysed reaction is UTP + NH4(+) + ATP = CTP + ADP + phosphate + 2 H(+). It functions in the pathway pyrimidine metabolism; CTP biosynthesis via de novo pathway; CTP from UDP: step 2/2. Its activity is regulated as follows. Allosterically activated by GTP, when glutamine is the substrate; GTP has no effect on the reaction when ammonia is the substrate. The allosteric effector GTP functions by stabilizing the protein conformation that binds the tetrahedral intermediate(s) formed during glutamine hydrolysis. Inhibited by the product CTP, via allosteric rather than competitive inhibition. Its function is as follows. Catalyzes the ATP-dependent amination of UTP to CTP with either L-glutamine or ammonia as the source of nitrogen. Regulates intracellular CTP levels through interactions with the four ribonucleotide triphosphates. The chain is CTP synthase from Anaeromyxobacter dehalogenans (strain 2CP-1 / ATCC BAA-258).